The sequence spans 765 residues: Probable dipeptidyl peptidase 4 (765 aa).

Residues 1–14 form the signal peptide; sequence MKWSILLLVGCAAA. Asn-35, Asn-78, Asn-101, Asn-110, Asn-169, Asn-218, Asn-465, and Asn-490 each carry an N-linked (GlcNAc...) asparagine glycan. Catalysis depends on Ser-613, which acts as the Charge relay system. N-linked (GlcNAc...) asparagine glycosylation is present at Asn-665. Active-site charge relay system residues include Asp-690 and His-725.

This sequence belongs to the peptidase S9B family.

Its subcellular location is the secreted. It catalyses the reaction Release of an N-terminal dipeptide, Xaa-Yaa-|-Zaa-, from a polypeptide, preferentially when Yaa is Pro, provided Zaa is neither Pro nor hydroxyproline.. Extracellular dipeptidyl-peptidase which removes N-terminal dipeptides sequentially from polypeptides having unsubstituted N-termini provided that the penultimate residue is proline. Contributes to pathogenicity. This Aspergillus fumigatus (strain ATCC MYA-4609 / CBS 101355 / FGSC A1100 / Af293) (Neosartorya fumigata) protein is Probable dipeptidyl peptidase 4 (dpp4).